The following is a 306-amino-acid chain: Elongation factor Ts (306 aa).

Residues 79–82 form an involved in Mg(2+) ion dislocation from EF-Tu region; that stretch reads TDFV.

It belongs to the EF-Ts family.

It is found in the cytoplasm. Its function is as follows. Associates with the EF-Tu.GDP complex and induces the exchange of GDP to GTP. It remains bound to the aminoacyl-tRNA.EF-Tu.GTP complex up to the GTP hydrolysis stage on the ribosome. This Mesorhizobium japonicum (strain LMG 29417 / CECT 9101 / MAFF 303099) (Mesorhizobium loti (strain MAFF 303099)) protein is Elongation factor Ts.